We begin with the raw amino-acid sequence, 829 residues long: Probable beta-glucosidase H (829 aa).

A glycan (N-linked (GlcNAc...) asparagine) is linked at Asn-13. The active site involves Asp-225. 6 N-linked (GlcNAc...) asparagine glycosylation sites follow: Asn-304, Asn-473, Asn-602, Asn-627, Asn-664, and Asn-749. In terms of domain architecture, PA14 spans 389 to 548 (RMLSNAVIHF…DPEQMVANAV (160 aa)).

It belongs to the glycosyl hydrolase 3 family.

The protein resides in the secreted. It carries out the reaction Hydrolysis of terminal, non-reducing beta-D-glucosyl residues with release of beta-D-glucose.. Its pathway is glycan metabolism; cellulose degradation. Functionally, beta-glucosidases are one of a number of cellulolytic enzymes involved in the degradation of cellulosic biomass. Catalyzes the last step releasing glucose from the inhibitory cellobiose. This Aspergillus fumigatus (strain CBS 144.89 / FGSC A1163 / CEA10) (Neosartorya fumigata) protein is Probable beta-glucosidase H (bglH).